The following is a 202-amino-acid chain: Peptide methionine sulfoxide reductase A3 (202 aa).

Residues 1–34 (MNILNRLGLGSSGQTNMDPSPIAQGNDDDTPAPG) form a disordered region. A Phosphoserine modification is found at S189.

It belongs to the MsrA Met sulfoxide reductase family. Expressed in rosette and cauline leaves, and at lower levels in roots, stems and flowers (at protein level).

It is found in the cytoplasm. The protein resides in the cytosol. It carries out the reaction L-methionyl-[protein] + [thioredoxin]-disulfide + H2O = L-methionyl-(S)-S-oxide-[protein] + [thioredoxin]-dithiol. The catalysed reaction is [thioredoxin]-disulfide + L-methionine + H2O = L-methionine (S)-S-oxide + [thioredoxin]-dithiol. Functionally, catalyzes the reduction of methionine sulfoxide (MetSO) to methionine in proteins. Plays a protective role against oxidative stress by restoring activity to proteins that have been inactivated by methionine oxidation. May prevent cellular oxidative damage due to light exposure. MSRA family specifically reduces the MetSO S-enantiomer. The sequence is that of Peptide methionine sulfoxide reductase A3 (MSRA3) from Arabidopsis thaliana (Mouse-ear cress).